The following is a 116-amino-acid chain: U11-theraphotoxin-Hhn1c (116 aa).

The N-terminal stretch at 1–21 is a signal peptide; sequence MNTVRVTFLLVFVLAVSLGQA. Residues 22–74 constitute a propeptide that is removed on maturation; sequence DKDENRMEMQEKTEQGKSYLDFAENLLLQKLEELEAKLLEEDSEESRNSRQKR. The tract at residues 61–83 is disordered; it reads EEDSEESRNSRQKRCIGEGVPCD. 3 disulfide bridges follow: cysteine 75-cysteine 90, cysteine 82-cysteine 95, and cysteine 89-cysteine 110.

Belongs to the neurotoxin 14 (magi-1) family. 01 (HNTX-16) subfamily. In terms of tissue distribution, expressed by the venom gland.

The protein localises to the secreted. Its function is as follows. Probable ion channel inhibitor. This chain is U11-theraphotoxin-Hhn1c, found in Cyriopagopus hainanus (Chinese bird spider).